The following is a 715-amino-acid chain: Inducible lysine decarboxylase (715 aa).

At Lys367 the chain carries N6-(pyridoxal phosphate)lysine.

Belongs to the Orn/Lys/Arg decarboxylase class-I family. As to quaternary structure, homodecamer. Interacts with RavA. Requires pyridoxal 5'-phosphate as cofactor.

Its subcellular location is the cytoplasm. It catalyses the reaction L-lysine + H(+) = cadaverine + CO2. The sequence is that of Inducible lysine decarboxylase (cadA) from Escherichia coli O157:H7.